A 553-amino-acid chain; its full sequence is MPTETEYDPSLGSKFVFVTGGVMSGLGKGITAASLGRLLSNAGFDVTAVKIDPYLNVDAGTMNPYQHGEVYVLDDGGEVDLDLGNYERFLDEDMTSDHNVTTGKVYQDVIERERSGDYLGKTVQIIPHVTDDIKRRVREAAEGSDVCLVEVGGTVGDIEGMPFLEALRQFSHEQDDEDILFTHVTLVPYSKNGEQKTKPTQHSVKELRSIGLQPDILVGRCEDRLDPDVREKIALFCDVPMDAVFSNPDVEDIYHVPLTVEEEGLDQYVMEQFDMVEDALPAAQRSTEWRDLVTRERTGEVDIALVGKYALEDAYMSIHEALKHASLEAGVEVNVLWVDSEKMHDHHERRIADADGIVVAGGFGSRGTAGKIDAIQHAREHDVPFLGLCLGFQLAVVEYARNVLGMTGAHSAEIDEDTEYPVIDLLPEQYDLEDLGGTMRLGAHETAIEPGTLAHDLYGATSCTERHRHRYEVNPEYIDDLTADGLTFSGEAGNRMEIVEHDDHPFFFGTQFHPEYRSRPTRASPPFVGLLDAVLERADVAPAGSDADVEVTN.

Positions 1–275 are amidoligase domain; the sequence is MPTETEYDPS…DQYVMEQFDM (275 aa). Ser24 is a binding site for CTP. Ser24 contacts UTP. 25–30 contacts ATP; it reads GLGKGI. Tyr65 lines the L-glutamine pocket. Asp82 lines the ATP pocket. Residues Asp82 and Glu150 each coordinate Mg(2+). CTP is bound by residues 157 to 159, 196 to 201, and Lys232; these read DIE and KTKPTQ. UTP contacts are provided by residues 196-201 and Lys232; that span reads KTKPTQ. The Glutamine amidotransferase type-1 domain occupies 308 to 540; that stretch reads KYALEDAYMS…LDAVLERADV (233 aa). Gly362 is an L-glutamine binding site. Cys389 (nucleophile; for glutamine hydrolysis) is an active-site residue. Residues 390 to 393, Glu413, and Arg470 contribute to the L-glutamine site; that span reads LGFQ. Catalysis depends on residues His513 and Glu515.

The protein belongs to the CTP synthase family. Homotetramer.

It catalyses the reaction UTP + L-glutamine + ATP + H2O = CTP + L-glutamate + ADP + phosphate + 2 H(+). The catalysed reaction is L-glutamine + H2O = L-glutamate + NH4(+). The enzyme catalyses UTP + NH4(+) + ATP = CTP + ADP + phosphate + 2 H(+). The protein operates within pyrimidine metabolism; CTP biosynthesis via de novo pathway; CTP from UDP: step 2/2. Allosterically activated by GTP, when glutamine is the substrate; GTP has no effect on the reaction when ammonia is the substrate. The allosteric effector GTP functions by stabilizing the protein conformation that binds the tetrahedral intermediate(s) formed during glutamine hydrolysis. Inhibited by the product CTP, via allosteric rather than competitive inhibition. Functionally, catalyzes the ATP-dependent amination of UTP to CTP with either L-glutamine or ammonia as the source of nitrogen. Regulates intracellular CTP levels through interactions with the four ribonucleotide triphosphates. The chain is CTP synthase from Halobacterium salinarum (strain ATCC 29341 / DSM 671 / R1).